A 674-amino-acid polypeptide reads, in one-letter code: Inactivation-no-after-potential D protein (674 aa).

A PDZ 1 domain is found at 17–106; that stretch reads MVTLDKTGKK…KIELEIQTFD (90 aa). The segment at 133–192 is disordered; the sequence is QTTNNNASGGQGMGQGQGQGQGMAGMNRQQSMQKRNTTFTASMRQKHSNYADEDDEDTRD. The span at 141–155 shows a compositional bias: gly residues; the sequence is GGQGMGQGQGQGQGM. Residues 159–175 show a composition bias toward polar residues; that stretch reads NRQQSMQKRNTTFTASM. PDZ domains follow at residues 249–332 and 364–448; these read RIEV…TSRR and ARTV…LTLK. The span at 458 to 475 shows a compositional bias: basic and acidic residues; the sequence is AAEEKKKEEAKKEEEKPQ. The segment at 458–481 is disordered; the sequence is AAEEKKKEEAKKEEEKPQEPATAE. PDZ domains lie at 489–577 and 584–664; these read LIEL…RADP and NVDL…TRPK. Phosphoserine is present on residues serine 598 and serine 600.

Interacts with the C-terminus of trp, and with norpA and inaC to form the inaD signaling complex. Interacts with Fkbp59, which together with trpl, rhodopsin and calmodulin may also be part of the inaD complex. Post-translationally, phosphorylated by inaC. In terms of tissue distribution, expressed in photoreceptor cells (R cells) of the compound eyes and ocelli.

It is found in the cell projection. The protein localises to the rhabdomere. Functionally, involved in the negative feedback regulation of the light-activated signaling cascade in photoreceptors through a calcium-mediated process. Interacts with tetrapeptide ligand located in C-terminal sequence of 3 key components of the visual cascade, tethering them and forming a macromolecular signaling phototransduction complex. The polypeptide is Inactivation-no-after-potential D protein (inaD) (Drosophila melanogaster (Fruit fly)).